The sequence spans 209 residues: Orotate phosphoribosyltransferase (209 aa).

5-phospho-alpha-D-ribose 1-diphosphate is bound by residues Arg96, Lys100, His102, and 122 to 130; that span reads EDLISTGGS. Orotate is bound at residue Ser126.

It belongs to the purine/pyrimidine phosphoribosyltransferase family. PyrE subfamily. In terms of assembly, homodimer. The cofactor is Mg(2+).

The enzyme catalyses orotidine 5'-phosphate + diphosphate = orotate + 5-phospho-alpha-D-ribose 1-diphosphate. Its pathway is pyrimidine metabolism; UMP biosynthesis via de novo pathway; UMP from orotate: step 1/2. Catalyzes the transfer of a ribosyl phosphate group from 5-phosphoribose 1-diphosphate to orotate, leading to the formation of orotidine monophosphate (OMP). The sequence is that of Orotate phosphoribosyltransferase from Listeria monocytogenes serovar 1/2a (strain ATCC BAA-679 / EGD-e).